Here is a 513-residue protein sequence, read N- to C-terminus: Na(+)/H(+) antiporter NhaB (513 aa).

12 consecutive transmembrane segments (helical) span residues 23-43 (LALI…PFVA), 52-72 (IFTL…LLAI), 97-117 (LLLM…LFIF), 120-140 (LLLS…AAAF), 144-164 (FLDA…FYGI), 202-222 (LMMH…VGEP), 238-258 (FFLR…LTCL), 303-323 (AIIG…VGLI), 348-368 (TESL…AVII), 391-411 (LFYI…VGTI), 447-467 (ATPN…APLI), and 475-495 (VWMA…CVEF).

The protein belongs to the NhaB Na(+)/H(+) (TC 2.A.34) antiporter family.

It localises to the cell inner membrane. The catalysed reaction is 2 Na(+)(in) + 3 H(+)(out) = 2 Na(+)(out) + 3 H(+)(in). Its function is as follows. Na(+)/H(+) antiporter that extrudes sodium in exchange for external protons. This is Na(+)/H(+) antiporter NhaB from Shigella sonnei (strain Ss046).